Reading from the N-terminus, the 294-residue chain is Bifunctional protein FolD (294 aa).

NADP(+)-binding positions include 175–177 (GVS) and Ile243.

The protein belongs to the tetrahydrofolate dehydrogenase/cyclohydrolase family. In terms of assembly, homodimer.

It catalyses the reaction (6R)-5,10-methylene-5,6,7,8-tetrahydrofolate + NADP(+) = (6R)-5,10-methenyltetrahydrofolate + NADPH. The enzyme catalyses (6R)-5,10-methenyltetrahydrofolate + H2O = (6R)-10-formyltetrahydrofolate + H(+). It participates in one-carbon metabolism; tetrahydrofolate interconversion. Its function is as follows. Catalyzes the oxidation of 5,10-methylenetetrahydrofolate to 5,10-methenyltetrahydrofolate and then the hydrolysis of 5,10-methenyltetrahydrofolate to 10-formyltetrahydrofolate. The polypeptide is Bifunctional protein FolD (Xanthomonas campestris pv. campestris (strain 8004)).